Consider the following 324-residue polypeptide: Phospho-N-acetylmuramoyl-pentapeptide-transferase (324 aa).

The next 10 helical transmembrane spans lie at 5-25, 52-72, 76-96, 117-137, 147-167, 176-196, 203-223, 227-247, 250-270, and 302-322; these read IIVI…PLFI, PTMG…WVTA, VLSA…VLGF, FIGQ…SGFS, WSFD…VGGS, LDGL…VLAW, VAVF…FNAH, VFMG…VAVL, LELL…SVII, and IVVT…YIEV.

It belongs to the glycosyltransferase 4 family. MraY subfamily. Requires Mg(2+) as cofactor.

The protein localises to the cell membrane. The enzyme catalyses UDP-N-acetyl-alpha-D-muramoyl-L-alanyl-gamma-D-glutamyl-meso-2,6-diaminopimeloyl-D-alanyl-D-alanine + di-trans,octa-cis-undecaprenyl phosphate = di-trans,octa-cis-undecaprenyl diphospho-N-acetyl-alpha-D-muramoyl-L-alanyl-D-glutamyl-meso-2,6-diaminopimeloyl-D-alanyl-D-alanine + UMP. The protein operates within cell wall biogenesis; peptidoglycan biosynthesis. In terms of biological role, catalyzes the initial step of the lipid cycle reactions in the biosynthesis of the cell wall peptidoglycan: transfers peptidoglycan precursor phospho-MurNAc-pentapeptide from UDP-MurNAc-pentapeptide onto the lipid carrier undecaprenyl phosphate, yielding undecaprenyl-pyrophosphoryl-MurNAc-pentapeptide, known as lipid I. The chain is Phospho-N-acetylmuramoyl-pentapeptide-transferase from Geobacillus thermodenitrificans (strain NG80-2).